A 394-amino-acid chain; its full sequence is Elongation factor Tu, mitochondrial (394 aa).

The 195-residue stretch at 10–204 folds into the tr-type G domain; the sequence is KPHCNIGTIG…AVDNYIPQPE (195 aa). The G1 stretch occupies residues 19–26; the sequence is GHVDHGKT. A GTP-binding site is contributed by 19 to 26; it reads GHVDHGKT. A G2 region spans residues 60-64; it reads GITIS. Residues 81–84 form a G3 region; the sequence is DCPG. GTP-binding positions include 81 to 85 and 136 to 139; these read DCPGH and NKVD. Residues 136-139 are G4; that stretch reads NKVD. The tract at residues 174 to 176 is G5; that stretch reads SAL.

The protein belongs to the TRAFAC class translation factor GTPase superfamily. Classic translation factor GTPase family. EF-Tu/EF-1A subfamily.

The protein resides in the mitochondrion. Functionally, this protein promotes the GTP-dependent binding of aminoacyl-tRNA to the A-site of ribosomes during protein biosynthesis. This Reclinomonas americana protein is Elongation factor Tu, mitochondrial (TUFA).